We begin with the raw amino-acid sequence, 466 residues long: Histidine--tRNA ligase (466 aa).

Belongs to the class-II aminoacyl-tRNA synthetase family. Homodimer.

The protein resides in the cytoplasm. The enzyme catalyses tRNA(His) + L-histidine + ATP = L-histidyl-tRNA(His) + AMP + diphosphate + H(+). The sequence is that of Histidine--tRNA ligase (hisS) from Bifidobacterium longum (strain NCC 2705).